The following is a 470-amino-acid chain: ADAM DEC1 (470 aa).

Residues 1-30 form the signal peptide; it reads MLRGISQLPAVATMSWVLLPVLWLIVQTQA. A propeptide spanning residues 31-205 is cleaved from the precursor; sequence IAIKQTPELT…QGPIRISRSL (175 aa). N61 is a glycosylation site (N-linked (GlcNAc...) asparagine). Positions 173–200 are disordered; it reads FTSNQEEQDPANHTCGVKSTDGKQGPIR. N184 is a glycosylation site (N-linked (GlcNAc...) (complex) asparagine). The Peptidase M12B domain occupies 218-412; the sequence is KYIDLYLVLD…QKPKCLLQAP (195 aa). N237 carries an N-linked (GlcNAc...) asparagine glycan. Cystine bridges form between C328/C407 and C369/C374. A Zn(2+)-binding site is contributed by H352. The active site involves E353. Residues H356 and D362 each contribute to the Zn(2+) site. The Disintegrin domain occupies 420–470; the sequence is TPVCGNHLLEVGEDCDCGSPKECTNLCCEALTCKLKPGTDCGGDAPNHTTE. A glycan (N-linked (GlcNAc...) asparagine) is linked at N466.

Zn(2+) is required as a cofactor. Expressed highly in the small intestine and appendix, moderately in lymph node, mucosal lining of the colon, thymus, spleen and very weakly in the bone marrow. Predominantly expressed in dendritic cells (DC) of the germinal center. Weakly expressed in monocyte and highly expressed in macrophage. Absent in immature DC.

The protein resides in the secreted. In terms of biological role, may play an important role in the control of the immune response and during pregnancy. The chain is ADAM DEC1 (ADAMDEC1) from Homo sapiens (Human).